Here is a 676-residue protein sequence, read N- to C-terminus: DNA ligase (676 aa).

NAD(+) is bound by residues 35 to 39, 84 to 85, and Glu115; these read DAVYD and SL. The N6-AMP-lysine intermediate role is filled by Lys117. The NAD(+) site is built by Arg138, Glu177, Lys296, and Lys320. Cys414, Cys417, Cys432, and Cys437 together coordinate Zn(2+). The region spanning 599-676 is the BRCT domain; the sequence is NANLKLVGKT…SEAELLKILA (78 aa).

This sequence belongs to the NAD-dependent DNA ligase family. LigA subfamily. Requires Mg(2+) as cofactor. Mn(2+) serves as cofactor.

The enzyme catalyses NAD(+) + (deoxyribonucleotide)n-3'-hydroxyl + 5'-phospho-(deoxyribonucleotide)m = (deoxyribonucleotide)n+m + AMP + beta-nicotinamide D-nucleotide.. DNA ligase that catalyzes the formation of phosphodiester linkages between 5'-phosphoryl and 3'-hydroxyl groups in double-stranded DNA using NAD as a coenzyme and as the energy source for the reaction. It is essential for DNA replication and repair of damaged DNA. The sequence is that of DNA ligase from Trichormus variabilis (strain ATCC 29413 / PCC 7937) (Anabaena variabilis).